The sequence spans 248 residues: Ribosomal RNA small subunit methyltransferase J (248 aa).

S-adenosyl-L-methionine-binding positions include 98–99, 114–115, 150–151, and Asp-168; these read RD, ER, and SS.

Belongs to the methyltransferase superfamily. RsmJ family.

It localises to the cytoplasm. The enzyme catalyses guanosine(1516) in 16S rRNA + S-adenosyl-L-methionine = N(2)-methylguanosine(1516) in 16S rRNA + S-adenosyl-L-homocysteine + H(+). Functionally, specifically methylates the guanosine in position 1516 of 16S rRNA. This Shewanella baltica (strain OS195) protein is Ribosomal RNA small subunit methyltransferase J.